A 154-amino-acid chain; its full sequence is Fucose mutarotase (154 aa).

His24 serves as the catalytic Proton donor. Asp32 is a binding site for substrate. The active site involves Asp69. Substrate is bound by residues Met79, Tyr120, Tyr138, and Asn140. The active site involves Tyr120.

The protein belongs to the RbsD / FucU family. In terms of assembly, mainly homodimer, but also exists as homotetramer, homooctamer, and homodecamer. The homodimeric form seems catalytically inactive.

It catalyses the reaction alpha-L-fucose = beta-L-fucose. The protein operates within carbohydrate metabolism; L-fucose metabolism. Functionally, involved in the interconversion between alpha- and beta-L-fucoses. L-Fucose (6-deoxy-L-galactose) exists as alpha-L-fucose (29.5%) and beta-L-fucose (70.5%), the beta-form is metabolized through the salvage pathway. GDP-L-fucose formed either by the de novo or salvage pathways is transported into the endoplasmic reticulum, where it serves as a substrate for N- and O-glycosylations by fucosyltransferases. Fucosylated structures expressed on cell surfaces or secreted in biological fluids are believed to play a critical role in cell-cell adhesion and recognition processes. The protein is Fucose mutarotase (FUOM) of Homo sapiens (Human).